Consider the following 309-residue polypeptide: Ornithine carbamoyltransferase (309 aa).

Residues 57 to 60, Gln84, Arg108, and 135 to 138 each bind carbamoyl phosphate; these read STRT and HPCQ. L-ornithine-binding positions include Asn166, Asp226, and 230–231; that span reads SM. Carbamoyl phosphate contacts are provided by residues 265-266 and Arg293; that span reads CL.

The protein belongs to the aspartate/ornithine carbamoyltransferase superfamily. OTCase family.

It is found in the cytoplasm. It catalyses the reaction carbamoyl phosphate + L-ornithine = L-citrulline + phosphate + H(+). Its pathway is amino-acid biosynthesis; L-arginine biosynthesis; L-arginine from L-ornithine and carbamoyl phosphate: step 1/3. Reversibly catalyzes the transfer of the carbamoyl group from carbamoyl phosphate (CP) to the N(epsilon) atom of ornithine (ORN) to produce L-citrulline. The protein is Ornithine carbamoyltransferase of Rhizorhabdus wittichii (strain DSM 6014 / CCUG 31198 / JCM 15750 / NBRC 105917 / EY 4224 / RW1) (Sphingomonas wittichii).